Here is a 212-residue protein sequence, read N- to C-terminus: External core antigen (212 aa).

An N-terminal signal peptide occupies residues 1-19; it reads MQLFHLCLIISCSCPTVQA. Residues 25–27 are HBEAG; it reads GWL. A disordered region spans residues 165–212; it reads NAPILSTLPETTVVRRRGRSPRRRTPSPRRRRSQSPRRRRSQSPASQC. Residues 178 to 205 show a composition bias toward basic residues; that stretch reads VRRRGRSPRRRTPSPRRRRSQSPRRRRS. The 1; half-length repeat unit spans residues 184–190; it reads SPRRRTP. The segment at 184 to 206 is 3 X 8 AA repeats of S-P-R-R-R-R-S-Q; the sequence is SPRRRTPSPRRRRSQSPRRRRSQ. A propeptide spanning residues 184–212 is cleaved from the precursor; the sequence is SPRRRTPSPRRRRSQSPRRRRSQSPASQC. Repeat copies occupy residues 191–198 and 199–206.

The protein belongs to the orthohepadnavirus precore antigen family. As to quaternary structure, homodimerizes. Post-translationally, phosphorylated. Cleaved by host furin.

The protein resides in the secreted. Its subcellular location is the host nucleus. Functionally, may regulate immune response to the intracellular capsid in acting as a T-cell tolerogen, by having an immunoregulatory effect which prevents destruction of infected cells by cytotoxic T-cells. This immune regulation may predispose to chronicity during perinatal infections and prevent severe liver injury during adult infections. The sequence is that of External core antigen from Gibbon hepatitis B virus subtype ayw3q (isolate Hope) (HBVgbn).